A 507-amino-acid chain; its full sequence is MAPVNQPKDKKHEKAHEHRSEEAKSAGKRKLDYEGLENEPLAKKLFLRKTSKAQEKIGWNRGGTVMRNTRALFHQPKWQCSIVHYVYQNMLGGSIRAQLRQCLQLPFLRSLTSYRLFRTASPFDRRVTCLEWHPTHPSTVAVGSKGGDIILWDYEVLTKTCFIKGKGPGDSLGDIKFSPYEAVKLYVASGDGTLSLQDLEGRAVQVISRAPDCGHENHNVCCWYCSVDVSASCRAVVTGDNLGNVVLLSTSGEEIWKLKLHKKKVTHVEFNSRCEWLLATASVDQTVKIWDLRNIKDKANFLHVLPHDKPVNAAYFSPTDGAKLLSTDQRNEIRVYSCSDWTKPQHLIPHPHRQFQHLTPIKATWHPRYDLIVVGRYPDPKFPGYTVNELRTVDIFDGNTGEMVCQLYDPNASGIISLNKFNPMGDTLASGMGFNILIWSREEMVMKKQEHLLKAMTEQGIGSRSLSRRGGQRQANPGTSKLKAKLLSWEVEEMGTKTKDSKSQGRK.

A disordered region spans residues 1 to 32; it reads MAPVNQPKDKKHEKAHEHRSEEAKSAGKRKLD. Residues 7-32 show a composition bias toward basic and acidic residues; that stretch reads PKDKKHEKAHEHRSEEAKSAGKRKLD. Required for interaction with DDB1 regions lie at residues 81–92 and 100–111; these read SIVHYVYQNMLG and RQCLQLPFLRSL. 5 WD repeats span residues 129-164, 172-207, 223-258, 264-307, and 310-350; these read CLEW…CFIK, LGDI…VQVI, WYCS…IWKL, KVTH…VLPH, and PVNA…LIPH. Positions 276-294 match the DWD box motif; sequence WLLATASVDQTVKIWDLRN. The interval 355–357 is photolesion recognition; sequence FQH. 2 WD repeats span residues 364–407 and 417–441; these read TWHP…VCQL and SLNK…IWSR. A disordered region spans residues 459 to 487; it reads QGIGSRSLSRRGGQRQANPGTSKLKAKLL.

It belongs to the WD repeat DDB2/WDR76 family. As to quaternary structure, component of the UV-DDB complex which includes DDB1 and DDB2. Component of the DCX (DDB1-CUL4-X-box) E3 ubiquitin-protein ligase complex DDB1-CUL4-ROC1 (also known as CUL4-DDB-ROC1 and CUL4-DDB-RBX1), which includes CUL4A or CUL4B, DDB1, DDB2 and RBX1. DDB2 may function as the substrate recognition module within this complex. A large number of other DCX complexes may also exist in which an alternate substrate targeting subunit replaces DDB2. These targeting subunits are generally known as DCAF (DDB1- and CUL4-associated factor) or CDW (CUL4-DDB1-associated WD40-repeat) proteins.

Its subcellular location is the nucleus. It localises to the chromosome. It participates in protein modification; protein ubiquitination. Functionally, protein, which is both involved in DNA repair and protein ubiquitination, as part of the UV-DDB complex and DCX (DDB1-CUL4-X-box) complexes, respectively. Core component of the UV-DDB complex (UV-damaged DNA-binding protein complex), a complex that recognizes UV-induced DNA damage and recruit proteins of the nucleotide excision repair pathway (the NER pathway) to initiate DNA repair. The UV-DDB complex preferentially binds to cyclobutane pyrimidine dimers (CPD), 6-4 photoproducts (6-4 PP), apurinic sites and short mismatches. Also functions as the substrate recognition module for the DCX (DDB2-CUL4-X-box) E3 ubiquitin-protein ligase complex DDB2-CUL4-ROC1 (also known as CUL4-DDB-ROC1 and CUL4-DDB-RBX1). The DDB2-CUL4-ROC1 complex may ubiquitinate histone H2A, histone H3 and histone H4 at sites of UV-induced DNA damage. The ubiquitination of histones may facilitate their removal from the nucleosome and promote subsequent DNA repair. The protein is DNA damage-binding protein 2 (DDB2) of Gallus gallus (Chicken).